We begin with the raw amino-acid sequence, 166 residues long: MEQDNSPRKIQFTVPLLEPHLDPEAAEQIRRRRPTPATLVLTSDQSSPEVDEDRIPNPLLKPSLAMSPRQRKKMTRTTPTMKELQMMVEHHLGQQEQGEEPEGAAEGTGAQESQPPGTPGTGAESRLGPSATAQKPAQPSPRAQERRGEEPSTAKTSQDSQGASAV.

Residue Met1 is modified to N-acetylmethionine. The disordered stretch occupies residues 1–166 (MEQDNSPRKI…SQDSQGASAV (166 aa)). Residues 9–12 (KIQF) are essential for activity. Residues 19–29 (PHLDPEAAEQI) show a composition bias toward basic and acidic residues. A Phosphothreonine; by PKA modification is found at Thr35. Positions 42–54 (TSDQSSPEVDEDR) are essential for activity. Phosphoserine is present on residues Ser43, Ser46, Ser47, and Ser67. The span at 104–114 (AAEGTGAQESQ) shows a compositional bias: low complexity. Basic and acidic residues predominate over residues 143–152 (AQERRGEEPS). Positions 143–166 (AQERRGEEPSTAKTSQDSQGASAV) are interaction with PPP1R15A. A compositionally biased stretch (polar residues) spans 153–166 (TAKTSQDSQGASAV).

Belongs to the protein phosphatase inhibitor 1 family. Interacts with PPP1R15A. Post-translationally, phosphorylation of Thr-35 is required for activity.

In terms of biological role, inhibitor of protein-phosphatase 1. This protein may be important in hormonal control of glycogen metabolism. Hormones that elevate intracellular cAMP increase I-1 activity in many tissues. I-1 activation may impose cAMP control over proteins that are not directly phosphorylated by PKA. Following a rise in intracellular calcium, I-1 is inactivated by calcineurin (or PP2B). Does not inhibit type-2 phosphatases. The sequence is that of Protein phosphatase 1 regulatory subunit 1A (PPP1R1A) from Oryctolagus cuniculus (Rabbit).